The primary structure comprises 272 residues: 2,3,4,5-tetrahydropyridine-2,6-dicarboxylate N-succinyltransferase (272 aa).

Substrate-binding residues include Arg104 and Asp141.

Belongs to the transferase hexapeptide repeat family. In terms of assembly, homotrimer.

It is found in the cytoplasm. The catalysed reaction is (S)-2,3,4,5-tetrahydrodipicolinate + succinyl-CoA + H2O = (S)-2-succinylamino-6-oxoheptanedioate + CoA. The protein operates within amino-acid biosynthesis; L-lysine biosynthesis via DAP pathway; LL-2,6-diaminopimelate from (S)-tetrahydrodipicolinate (succinylase route): step 1/3. This Dechloromonas aromatica (strain RCB) protein is 2,3,4,5-tetrahydropyridine-2,6-dicarboxylate N-succinyltransferase.